Consider the following 357-residue polypeptide: Protein-glutamate methylesterase/protein-glutamine glutaminase 5 (357 aa).

The region spanning 10–127 (RVLVVDDSSF…IDAQKAFKEE (118 aa)) is the Response regulatory domain. D61 is subject to 4-aspartylphosphate. One can recognise a CheB-type methylesterase domain in the interval 161–357 (PRPAGQRYQY…IGTEITKIAG (197 aa)). Catalysis depends on residues S176, H203, and D301.

Belongs to the CheB family. Post-translationally, phosphorylated by CheA. Phosphorylation of the N-terminal regulatory domain activates the methylesterase activity.

Its subcellular location is the cytoplasm. The catalysed reaction is [protein]-L-glutamate 5-O-methyl ester + H2O = L-glutamyl-[protein] + methanol + H(+). It catalyses the reaction L-glutaminyl-[protein] + H2O = L-glutamyl-[protein] + NH4(+). Involved in chemotaxis. Part of a chemotaxis signal transduction system that modulates chemotaxis in response to various stimuli. Catalyzes the demethylation of specific methylglutamate residues introduced into the chemoreceptors (methyl-accepting chemotaxis proteins or MCP) by CheR. Also mediates the irreversible deamidation of specific glutamine residues to glutamic acid. The polypeptide is Protein-glutamate methylesterase/protein-glutamine glutaminase 5 (Geobacter metallireducens (strain ATCC 53774 / DSM 7210 / GS-15)).